A 70-amino-acid polypeptide reads, in one-letter code: Large ribosomal subunit protein bL31 (70 aa).

At lysine 8 the chain carries N6-acetyllysine. Zn(2+) is bound by residues cysteine 16, cysteine 18, cysteine 37, and cysteine 40.

It belongs to the bacterial ribosomal protein bL31 family. Type A subfamily. In terms of assembly, part of the 50S ribosomal subunit. Requires Zn(2+) as cofactor.

Its function is as follows. Binds the 23S rRNA. This chain is Large ribosomal subunit protein bL31, found in Escherichia coli O6:K15:H31 (strain 536 / UPEC).